Here is a 148-residue protein sequence, read N- to C-terminus: Transcriptional regulator MraZ (148 aa).

SpoVT-AbrB domains are found at residues 5–51 (AAAL…PSPA) and 80–123 (ARTE…SEAG).

This sequence belongs to the MraZ family. As to quaternary structure, forms oligomers.

Its subcellular location is the cytoplasm. The protein resides in the nucleoid. This Dechloromonas aromatica (strain RCB) protein is Transcriptional regulator MraZ.